An 86-amino-acid chain; its full sequence is Large ribosomal subunit protein uL10 (86 aa).

This sequence belongs to the universal ribosomal protein uL10 family. In terms of assembly, part of the ribosomal stalk of the 50S ribosomal subunit. The N-terminus interacts with L11 and the large rRNA to form the base of the stalk. The C-terminus forms an elongated spine to which L12 dimers bind in a sequential fashion forming a multimeric L10(L12)X complex.

Forms part of the ribosomal stalk, playing a central role in the interaction of the ribosome with GTP-bound translation factors. This is Large ribosomal subunit protein uL10 (rplJ) from Serratia marcescens.